The following is a 197-amino-acid chain: Nucleoid occlusion factor SlmA (197 aa).

The 61-residue stretch at 7 to 67 folds into the HTH tetR-type domain; sequence INRREHILQC…GLIEFIEESL (61 aa). A DNA-binding region (H-T-H motif) is located at residues 30–49; that stretch reads TTAKLASEVGVSEAALYRHF. A coiled-coil region spans residues 110 to 130; it reads ALLGENERLRSRISSLFAKIE.

Belongs to the nucleoid occlusion factor SlmA family. Homodimer. Interacts with FtsZ.

It localises to the cytoplasm. The protein localises to the nucleoid. In terms of biological role, required for nucleoid occlusion (NO) phenomenon, which prevents Z-ring formation and cell division over the nucleoid. Acts as a DNA-associated cell division inhibitor that binds simultaneously chromosomal DNA and FtsZ, and disrupts the assembly of FtsZ polymers. SlmA-DNA-binding sequences (SBS) are dispersed on non-Ter regions of the chromosome, preventing FtsZ polymerization at these regions. The sequence is that of Nucleoid occlusion factor SlmA from Shewanella sp. (strain W3-18-1).